Reading from the N-terminus, the 376-residue chain is Putative glutamate--cysteine ligase 2-1 (376 aa).

Belongs to the glutamate--cysteine ligase type 2 family. YbdK subfamily.

The enzyme catalyses L-cysteine + L-glutamate + ATP = gamma-L-glutamyl-L-cysteine + ADP + phosphate + H(+). Its function is as follows. ATP-dependent carboxylate-amine ligase which exhibits weak glutamate--cysteine ligase activity. The chain is Putative glutamate--cysteine ligase 2-1 from Mycobacterium sp. (strain JLS).